The following is a 466-amino-acid chain: 3-isopropylmalate dehydratase large subunit (466 aa).

[4Fe-4S] cluster is bound by residues Cys347, Cys407, and Cys410.

Belongs to the aconitase/IPM isomerase family. LeuC type 1 subfamily. In terms of assembly, heterodimer of LeuC and LeuD. The cofactor is [4Fe-4S] cluster.

The catalysed reaction is (2R,3S)-3-isopropylmalate = (2S)-2-isopropylmalate. It participates in amino-acid biosynthesis; L-leucine biosynthesis; L-leucine from 3-methyl-2-oxobutanoate: step 2/4. Functionally, catalyzes the isomerization between 2-isopropylmalate and 3-isopropylmalate, via the formation of 2-isopropylmaleate. The chain is 3-isopropylmalate dehydratase large subunit from Shigella flexneri serotype 5b (strain 8401).